We begin with the raw amino-acid sequence, 460 residues long: Cysteine--tRNA ligase (460 aa).

Residue cysteine 28 coordinates Zn(2+). The 'HIGH' region motif lies at 30 to 40; the sequence is MTVYDYCHLGH. Residues cysteine 209, histidine 234, and glutamate 238 each contribute to the Zn(2+) site. A 'KMSKS' region motif is present at residues 266-270; it reads KMSKS. Lysine 269 lines the ATP pocket.

It belongs to the class-I aminoacyl-tRNA synthetase family. In terms of assembly, monomer. Zn(2+) serves as cofactor.

The protein localises to the cytoplasm. It carries out the reaction tRNA(Cys) + L-cysteine + ATP = L-cysteinyl-tRNA(Cys) + AMP + diphosphate. This chain is Cysteine--tRNA ligase, found in Pseudomonas putida (strain ATCC 47054 / DSM 6125 / CFBP 8728 / NCIMB 11950 / KT2440).